The chain runs to 347 residues: uncharacterized protein (347 aa).

Positions 1–21 (MNKKSLNIVVMFGILMILAFS) are cleaved as a signal peptide.

This sequence belongs to the bacterial solute-binding protein 1 family. WtpA subfamily.

This is an uncharacterized protein from Methanococcus maripaludis (strain C5 / ATCC BAA-1333).